Here is a 195-residue protein sequence, read N- to C-terminus: dCTP deaminase (195 aa).

DCTP contacts are provided by residues 110–115 (RSSLAR), D128, 136–138 (VLE), Y171, K178, and Q182. The active-site Proton donor/acceptor is the E138.

Belongs to the dCTP deaminase family. Homotrimer.

It carries out the reaction dCTP + H2O + H(+) = dUTP + NH4(+). The protein operates within pyrimidine metabolism; dUMP biosynthesis; dUMP from dCTP (dUTP route): step 1/2. Functionally, catalyzes the deamination of dCTP to dUTP. In Idiomarina loihiensis (strain ATCC BAA-735 / DSM 15497 / L2-TR), this protein is dCTP deaminase.